Reading from the N-terminus, the 398-residue chain is Streptopain (398 aa).

An N-terminal signal peptide occupies residues 1–27 (MNKKKLGIRLLSLLALGGFVLANPVFA). Positions 28-145 (DQNFARNEKE…TTYAGTAEIK (118 aa)) are excised as a propeptide. Cys192 (nucleophile) is an active-site residue. At Cys192 the chain carries Cysteine methyl disulfide; in zymogen form. 2 residues coordinate a protein: Ser282 and Gly339. His340 serves as the catalytic Proton acceptor. Positions 368 to 390 (RLDALNPSALGTGGGAGGFNGYQ) are C-terminal active site loop.

The protein belongs to the peptidase C10 family. In terms of assembly, monomer. Post-translationally, the mature protease is derived from the precursor sequence by cleavage, either in cis via an autocatalytic mechanism, or in trans by mature SpeB or host proteases (trypsin, plasmin or subtilisin). Maturation can involve a number of protein cleavage intermediates. Mature SpeB probably plays the most important role in protein maturation in physiological conditions. In terms of processing, methylthiolation at Cys-192 of the inactive zymogen form is probably involved in the mechanism of secretion of the proteinase into the culture fluid.

The protein resides in the secreted. The protein localises to the host extracellular space. It is found in the host cytoplasm. It carries out the reaction Preferential cleavage with hydrophobic residues at P2, P1 and P1'.. With respect to regulation, synthesized as an inactive zymogen to protect the intracellular components of the bacteria from proteolytic activity during protein production. Once secreted into the extracellular milieu, cleaved into the active protease: maturation can be mediated in cis by autocatalytic cleavage, or in trans by mature SpeB or host proteases. Protease activity is strongly inhibited by zinc and copper, which prevent its maturation into an active protease: inhibition by metal ions may be required to prevent proteolysis of streptococcal proteins. Its function is as follows. Cysteine protease that acts as a key streptococcal virulence factor by cleaving host proteins involved in immune response. Triggers inflammation by mediating cleavage of host proteins, which can both promote host pathogenesis by triggering sterile inflammation and/or restrict streptococcal infection, depending on host immune statue and infection site. Cleaves host gasdermin-A (GSDMA) in epithelial cells, promoting GSDMA activation and formation of gasdermin pores, triggering pyroptosis. Pyroptosis triggers the elimination of the infected skin cell, depriving the pathogen of its protective niche, while inducing an inflammatory response. This ultimately prevents bacterial penetration of the epithelial barrier and a subsequent systemic dissemination of the pathogen. Also mediates cleavage of the cytokine precursor interleukin-1 beta (IL1B) to its mature form, resulting in inflammation and septic shock. SpeB-mediated maturation of IL1B plays a dual role depending on infection site: while IL1B inflammatory response prevents bacterial growth during invasive skin infections, it promotes streptococcal infection of the nasopharynx by disrupting colonization resistance mediated by the microbiota. Inhibits host autophagy be catalyzing cleavage and inactivation of key autophagy factors, such as CALCOCO2, NBR1 and SQSTM1. Cleaves and inhibits a number of complement factors, such as C2, C3-beta chain of C3, C4, C5 or SERPING1, thereby promoting evasion of host immunity. May also impair adaptive immunity by catalyzing cleavage and degradation of host immunoglobulins to promote immune system evasion; the relevance of this activity is however unsure in vivo. Catalyzes maturation and release of the peptide hormone bradykinin from the precursor Kininogen-1 (KNG1) to produce hypotension during septic shock. Also involved in bacterial translocation across the host epithelial barrier by mediating cleavage and degradation of host epithelial junction proteins, such as CDH1 and OCLN. Additionally, has been involved in degradation of fibronectin and vitronectin, two host extracellular matrix proteins involved in tissue integrity. Also able to catalyze cleavage and degradation of streptococcal proteins, such as C5a peptidase, EndoS or SmeZ. Degradation of streptococcal proteins is however strictly regulated to preserve integrity of other virulence factors. The sequence is that of Streptopain (speB) from Streptococcus pyogenes serotype M28 (strain MGAS6180).